Reading from the N-terminus, the 357-residue chain is Popeye domain-containing protein 1 (357 aa).

Residues 1–38 (MDTTAISPLTPLGVIPDLKNATSVPFNETACENWKEIH) are Extracellular-facing. Residues Asn-20 and Asn-27 are each glycosylated (N-linked (GlcNAc...) asparagine). A helical membrane pass occupies residues 39–59 (HLVFHVANICFAAGLVIPTTL). Over 60–62 (NLH) the chain is Cytoplasmic. A helical membrane pass occupies residues 63-83 (MIFLRGLLTVGCALFIIWATL). Residues 84-89 (YRCALD) are Extracellular-facing. A helical transmembrane segment spans residues 90 to 110 (IMIWNSVFLVVNLLHFIYLVY). Topologically, residues 111–357 (KRRPIKIEKE…AEKLELQRLP (247 aa)) are cytoplasmic. Low complexity predominate over residues 309–323 (GTSSSSSLRPGRTSP). Positions 309-357 (GTSSSSSLRPGRTSPYLRTSAKMKPIEESVEDDVFEAPSAEKLELQRLP) are disordered. The span at 347–357 (SAEKLELQRLP) shows a compositional bias: basic and acidic residues.

It belongs to the popeye family. In terms of assembly, homodimer. Homodimerization requires the C-terminus cytoplasmic region. As to expression, expressed in the heart and skeletal muscle (at protein level). Isoform 1 and isoform 4: expressed in heart, muscle, brain, stomach, kidney, lung and spleen.

It is found in the lateral cell membrane. Its subcellular location is the cell junction. The protein localises to the tight junction. It localises to the membrane. The protein resides in the cell membrane. It is found in the sarcolemma. Its subcellular location is the caveola. Its function is as follows. Cell adhesion molecule involved in the establishment and/or maintenance of cell integrity. Involved in the formation and regulation of the tight junction (TJ) paracellular permeability barrier in epithelial cells. Induces primordial adhesive contact and aggregation of epithelial cells in a Ca(2+)-independent manner. Involved in epithelial movement during corneal sheet formation and regeneration. May play a role in VAMP3-mediated vesicular transport and recycling of receptor molecules. May play a role in the regulation of cell shape and movement by modulating the Rho-GTPase activity. May be involved in skeletal muscle and heart development as well as in the maintenance of heart function. May also be involved in striated muscle regeneration and in the regulation of cell spreading. This Gallus gallus (Chicken) protein is Popeye domain-containing protein 1 (POPDC1).